The following is a 138-amino-acid chain: Putative nickel-responsive regulator (138 aa).

Residues His-78, His-89, His-91, and Cys-97 each coordinate Ni(2+).

This sequence belongs to the transcriptional regulatory CopG/NikR family. Ni(2+) is required as a cofactor.

Transcriptional regulator. The chain is Putative nickel-responsive regulator from Desulfovibrio desulfuricans (strain ATCC 27774 / DSM 6949 / MB).